The following is a 148-amino-acid chain: Snaclec stejaggregin-A subunit beta-3 (148 aa).

Positions methionine 1–alanine 23 are cleaved as a signal peptide. Cysteine 27 and cysteine 38 are disulfide-bonded. The 112-residue stretch at tyrosine 34–lysine 145 folds into the C-type lectin domain. N-linked (GlcNAc...) asparagine glycans are attached at residues asparagine 47 and asparagine 78. 2 cysteine pairs are disulfide-bonded: cysteine 55/cysteine 144 and cysteine 121/cysteine 136.

Belongs to the snaclec family. Heteromultimer; disulfide-linked. As to expression, expressed by the venom gland.

Its subcellular location is the secreted. In terms of biological role, interferes with one step of hemostasis (modulation of platelet aggregation, or coagulation cascade, for example). The chain is Snaclec stejaggregin-A subunit beta-3 from Trimeresurus stejnegeri (Chinese green tree viper).